The primary structure comprises 474 residues: Dihydrolipoyl dehydrogenase (474 aa).

FAD is bound by residues 34–42 (EKEKLGGTC), Lys51, and Gly114. A disulfide bridge connects residues Cys42 and Cys47. NAD(+) contacts are provided by residues 188–192 (GGGVI), Glu211, Val245, and 278–281 (SIGR). Asp320 and Ala328 together coordinate FAD. Catalysis depends on His453, which acts as the Proton acceptor.

Belongs to the class-I pyridine nucleotide-disulfide oxidoreductase family. In terms of assembly, homodimer. It depends on FAD as a cofactor.

It localises to the cytoplasm. The catalysed reaction is N(6)-[(R)-dihydrolipoyl]-L-lysyl-[protein] + NAD(+) = N(6)-[(R)-lipoyl]-L-lysyl-[protein] + NADH + H(+). Its function is as follows. The branched-chain alpha-keto dehydrogenase complex catalyzes the overall conversion of alpha-keto acids to acyl-CoA and CO(2). It contains multiple copies of 3 enzymatic components: branched-chain alpha-keto acid decarboxylase (E1), lipoamide acyltransferase (E2) and lipoamide dehydrogenase (E3). The protein is Dihydrolipoyl dehydrogenase (bfmBC) of Bacillus subtilis (strain 168).